Consider the following 398-residue polypeptide: Lysophosphatidylserine lipase ABHD12 (398 aa).

Residues 1 to 15 (MRKRTEPVTLEHERC) show a composition bias toward basic and acidic residues. Residues 1–24 (MRKRTEPVTLEHERCAASGSSSSG) are disordered. The Cytoplasmic portion of the chain corresponds to 1–74 (MRKRTEPVTL…RKSLWFRLRK (74 aa)). The chain crosses the membrane as a helical span at residues 75-95 (ILLCVLGFYIAIPFLVKLCPG). The Extracellular portion of the chain corresponds to 96–398 (IQAKLIFLNF…LGKSEPERQH (303 aa)). N-linked (GlcNAc...) asparagine glycosylation occurs at Asn-123. The Nucleophile role is filled by Ser-246. Residues Asp-333 and His-372 each act as charge relay system in the active site.

It belongs to the serine esterase family.

It is found in the endoplasmic reticulum membrane. It carries out the reaction 1-(9Z-octadecenoyl)-sn-glycero-3-phospho-L-serine + H2O = sn-glycero-3-phospho-L-serine + (9Z)-octadecenoate + H(+). The catalysed reaction is 1-(9Z-octadecenoyl)-sn-glycero-3-phospho-(1'-sn-glycerol) + H2O = sn-glycero-3-phospho-(1'-sn-glycerol) + (9Z)-octadecenoate + H(+). The enzyme catalyses 1-(9Z-octadecenoyl)-sn-glycero-3-phospho-(1D-myo-inositol) + H2O = sn-glycero-3-phospho-1D-myo-inositol + (9Z)-octadecenoate + H(+). It catalyses the reaction 1-(9Z-octadecenoyl)-sn-glycero-3-phosphoethanolamine + H2O = sn-glycero-3-phosphoethanolamine + (9Z)-octadecenoate + H(+). It carries out the reaction 1-(9Z-octadecenoyl)-sn-glycero-3-phosphocholine + H2O = 1-(9Z-octadecenoyl)-sn-glycerol + phosphocholine + H(+). The catalysed reaction is 2-(9Z-octadecenoyl)-glycerol + H2O = glycerol + (9Z)-octadecenoate + H(+). The enzyme catalyses 1-hexadecanoyl-sn-glycero-3-phospho-L-serine + H2O = sn-glycero-3-phospho-L-serine + hexadecanoate + H(+). It catalyses the reaction 2-(5Z,8Z,11Z,14Z-eicosatetraenoyl)-glycerol + H2O = glycerol + (5Z,8Z,11Z,14Z)-eicosatetraenoate + H(+). It carries out the reaction Hydrolyzes glycerol monoesters of long-chain fatty acids.. The catalysed reaction is 1-decanoylglycerol + H2O = decanoate + glycerol + H(+). The enzyme catalyses 1-dodecanoylglycerol + H2O = dodecanoate + glycerol + H(+). It catalyses the reaction 1-tetradecanoylglycerol + H2O = tetradecanoate + glycerol + H(+). It carries out the reaction 2-hexadecanoylglycerol + H2O = glycerol + hexadecanoate + H(+). The catalysed reaction is 1-(9Z-octadecenoyl)-glycerol + H2O = glycerol + (9Z)-octadecenoate + H(+). The enzyme catalyses 2-(9Z,12Z-octadecadienoyl)-glycerol + H2O = (9Z,12Z)-octadecadienoate + glycerol + H(+). It catalyses the reaction 1-(5Z,8Z,11Z,14Z-eicosatetraenoyl)-glycerol + H2O = glycerol + (5Z,8Z,11Z,14Z)-eicosatetraenoate + H(+). It carries out the reaction 1-(9Z,12Z-octadecadienoyl)-glycerol + H2O = (9Z,12Z)-octadecadienoate + glycerol + H(+). The catalysed reaction is 1-hexadecanoylglycerol + H2O = glycerol + hexadecanoate + H(+). The enzyme catalyses 1-octadecanoylglycerol + H2O = octadecanoate + glycerol + H(+). It catalyses the reaction 1-octadecanoyl-2-(9,10-epoxyoctadecanoyl)-sn-glycero-3-phospho-L-serine + H2O = 9,10-epoxyoctadecanoate + 1-octadecanoyl-sn-glycero-3-phosphoserine + H(+). It carries out the reaction 1-octadecanoyl-2-(10-hydroxyoctadecanoyl)-sn-glycero-3-phospho-L-serine + H2O = 1-octadecanoyl-sn-glycero-3-phosphoserine + 10-hydroxyoctadecanoate + H(+). The catalysed reaction is 1-hexadecanoyl-2-(10-hydroxyoctadecanoyl)-sn-glycero-3-phospho-L-serine + H2O = 10-hydroxyoctadecanoate + 1-hexadecanoyl-sn-glycero-3-phospho-L-serine + H(+). In terms of biological role, lysophosphatidylserine (LPS) lipase that mediates the hydrolysis of lysophosphatidylserine, a class of signaling lipids that regulates immunological and neurological processes. Represents a major lysophosphatidylserine lipase in the brain, thereby playing a key role in the central nervous system. Also able to hydrolyze oxidized phosphatidylserine; oxidized phosphatidylserine is produced in response to severe inflammatory stress and constitutes a proapoptotic 'eat me' signal. Also has monoacylglycerol (MAG) lipase activity: hydrolyzes 2-arachidonoylglycerol (2-AG), thereby acting as a regulator of endocannabinoid signaling pathways. Has a strong preference for very-long-chain lipid substrates; substrate specificity is likely due to improved catalysis and not improved substrate binding. This is Lysophosphatidylserine lipase ABHD12 from Rattus norvegicus (Rat).